Consider the following 660-residue polypeptide: V-type ATP synthase subunit I (660 aa).

Transmembrane regions (helical) follow at residues 312 to 332, 362 to 382, 453 to 473, 485 to 505, 520 to 540, 560 to 580, and 593 to 613; these read FFAF…GLLF, ILGL…GMSF, FIDN…LSLG, IGWI…LGTV, GQIG…LAMI, VLSY…GATF, and SIVI…GGVI.

Belongs to the V-ATPase 116 kDa subunit family.

It localises to the cell membrane. Produces ATP from ADP in the presence of a proton gradient across the membrane. This Chlamydia pneumoniae (Chlamydophila pneumoniae) protein is V-type ATP synthase subunit I (atpI).